Here is a 376-residue protein sequence, read N- to C-terminus: tRNA (guanine(26)-N(2))-dimethyltransferase (376 aa).

The Trm1 methyltransferase domain occupies 4–373 (VAVKEGLARI…APFGVVAEVM (370 aa)). S-adenosyl-L-methionine-binding residues include Arg-36, Arg-61, Asp-78, Asp-120, and Ala-121.

The protein belongs to the class I-like SAM-binding methyltransferase superfamily. Trm1 family.

The enzyme catalyses guanosine(26) in tRNA + 2 S-adenosyl-L-methionine = N(2)-dimethylguanosine(26) in tRNA + 2 S-adenosyl-L-homocysteine + 2 H(+). Its function is as follows. Dimethylates a single guanine residue at position 26 of a number of tRNAs using S-adenosyl-L-methionine as donor of the methyl groups. This Thermococcus kodakarensis (strain ATCC BAA-918 / JCM 12380 / KOD1) (Pyrococcus kodakaraensis (strain KOD1)) protein is tRNA (guanine(26)-N(2))-dimethyltransferase.